Reading from the N-terminus, the 156-residue chain is Endoribonuclease YbeY (156 aa).

Residues histidine 114, histidine 118, and histidine 124 each coordinate Zn(2+).

The protein belongs to the endoribonuclease YbeY family. Zn(2+) is required as a cofactor.

The protein resides in the cytoplasm. Functionally, single strand-specific metallo-endoribonuclease involved in late-stage 70S ribosome quality control and in maturation of the 3' terminus of the 16S rRNA. The polypeptide is Endoribonuclease YbeY (Sodalis glossinidius (strain morsitans)).